An 80-amino-acid polypeptide reads, in one-letter code: Crustacean hyperglycemic hormones (80 aa).

3 disulfides stabilise this stretch: Cys13/Cys49, Cys29/Cys45, and Cys32/Cys58. Val78 bears the Valine amide mark.

Belongs to the arthropod CHH/MIH/GIH/VIH hormone family. In terms of tissue distribution, produced by the medulla terminalis X-organ in the eyestalks and transported to the sinus gland where they are stored and released.

The protein localises to the secreted. Its function is as follows. Hormone found in the sinus gland of isopods and decapods which controls the blood sugar level. Has a secretagogue action over the amylase released from the midgut gland. May act as a stress hormone and may be involved in the control of molting and reproduction. The protein is Crustacean hyperglycemic hormones of Penaeus vannamei (Whiteleg shrimp).